We begin with the raw amino-acid sequence, 560 residues long: Membrane protein insertase YidC (560 aa).

Transmembrane regions (helical) follow at residues 5 to 25 (IINLIAAIILSLSIIFGWQYF), 334 to 354 (AIDFGWFYIITKPVFYAMNFF), 357 to 377 (YVGNFGVSILIVTVIIKLLMF), 431 to 451 (LPILVQIPVFFSIYKVLYVTI), 476 to 496 (LFGLLPFSPPLFLMIGAWPIL), and 522 to 542 (FMPLIFLFMFSSFPVGLLIYW).

The protein belongs to the OXA1/ALB3/YidC family. Type 1 subfamily. As to quaternary structure, interacts with the Sec translocase complex via SecD. Specifically interacts with transmembrane segments of nascent integral membrane proteins during membrane integration.

Its subcellular location is the cell inner membrane. In terms of biological role, required for the insertion and/or proper folding and/or complex formation of integral membrane proteins into the membrane. Involved in integration of membrane proteins that insert both dependently and independently of the Sec translocase complex, as well as at least some lipoproteins. Aids folding of multispanning membrane proteins. The chain is Membrane protein insertase YidC from Rickettsia africae (strain ESF-5).